The chain runs to 37 residues: Esculentin-2A (37 aa).

Cysteine 31 and cysteine 37 are joined by a disulfide.

This sequence belongs to the frog skin active peptide (FSAP) family. Esculentin subfamily. As to expression, expressed by the skin glands.

Its subcellular location is the secreted. Its function is as follows. Shows antibacterial activity against representative Gram-negative and Gram-positive bacterial species, and hemolytic activity. The sequence is that of Esculentin-2A from Pelophylax lessonae (Pool frog).